Reading from the N-terminus, the 795-residue chain is Protein ROOT HAIR DEFECTIVE 3 homolog 1 (795 aa).

The Cytoplasmic segment spans residues 1-682; it reads MDADKSEGCC…EANRRGNNWL (682 aa). The region spanning 39–254 is the GB1/RHD3-type G domain; sequence GLSYAVVSIM…IAPGGLAGDR (216 aa). A GTP-binding site is contributed by 49 to 56; the sequence is GPQSSGKS. Residues 218 to 244 adopt a coiled-coil conformation; sequence VALSSYEEKEEQFKEQIASLRQRFMHS. A helical transmembrane segment spans residues 683–703; it reads PPPWAILALIVLGFNEFMTLL. Residues 704–706 are Lumenal-facing; the sequence is RNP. A helical membrane pass occupies residues 707–727; sequence LYLGVMFVAFLLAKALWTQLD. Residues 728–795 lie on the Cytoplasmic side of the membrane; sequence IPGEFRNGAL…PDHKSSSKED (68 aa). A disordered region spans residues 761–795; it reads QGEDPPAANPENRRSSNNTSSSENPPDHKSSSKED. The span at 775–784 shows a compositional bias: low complexity; the sequence is SSNNTSSSEN. Residues 785 to 795 show a composition bias toward basic and acidic residues; that stretch reads PPDHKSSSKED.

It belongs to the TRAFAC class dynamin-like GTPase superfamily. GB1/RHD3 GTPase family. RHD3 subfamily. In terms of tissue distribution, specifically expressed in flowers.

It is found in the endoplasmic reticulum membrane. Its function is as follows. Probable GTP-binding protein that may be involved in cell development. The polypeptide is Protein ROOT HAIR DEFECTIVE 3 homolog 1 (Arabidopsis thaliana (Mouse-ear cress)).